A 559-amino-acid polypeptide reads, in one-letter code: MEKVLTDIEIAQKAQMKPIGEIAEKYGILEDELELYGKYKAKLSLDIFDRLKDEKDGKLVLVTAISPTPAGEGKSTTSIGLGQALNKIGKKTFIALREPSLGPVFGVKGGAAGGGYAQVVPMEDINLHFTGDMHAIGITNNLLSAAIDNHIHQGNALKIDSREIVWKRVVDMNDRALRNVVVGMGGKACGFTRQDGFMITVASEVMAILCLAKDLMDLKERLGNIIVAYSLEGKPVTAGDLKVNGAMAMLLKDAIKPNIVQTLENTPALIHGGPFANIAHGCNSLIATRLGLKLGDILVTEAGFGADLGAEKFLDIKCRYGGLKPDAVVIVATIRALKMHGGVKKTELSGENLEALDKGFANLQKHITNMKNFGLPVMVAVNRFITDSEAEIDLLIKKCKEIGVEVSLNEVWAKGGEGGIEMAEKLVKILETEKPNYKPLYDVEDSIPEKLNKIVKELYGGEGVVIESSAMKQIKKLEEIGLDKLPICMAKTQFSFSDDATLMGAPKGFNITIKNVRVSAGAGFIVCETGNIMVMPGLPKVPAAEKMDVDENGNISGLF.

68–75 (TPAGEGKS) is a binding site for ATP.

The protein belongs to the formate--tetrahydrofolate ligase family.

The enzyme catalyses (6S)-5,6,7,8-tetrahydrofolate + formate + ATP = (6R)-10-formyltetrahydrofolate + ADP + phosphate. It participates in one-carbon metabolism; tetrahydrofolate interconversion. This chain is Formate--tetrahydrofolate ligase, found in Clostridium tetani (strain Massachusetts / E88).